The sequence spans 225 residues: Golgi to ER traffic protein 1 (225 aa).

Methionine 1 is a topological domain (lumenal). Residues 2–21 form a helical membrane-spanning segment; sequence NWVIIAALFFVIINKLLQYT. Residues 22 to 107 are Cytoplasmic-facing; it reads SRYQEAWINK…SQSKLFNRLK (86 aa). Residues 37 to 104 are a coiled coil; it reads DISSLSKEYS…AKDSQSKLFN (68 aa). A helical transmembrane segment spans residues 108–128; the sequence is LLTLTLPFMILKLWKGKFIVY. The Lumenal segment spans residues 129–172; that stretch reads DIPTKDTFPVIVNGVLSQGLLYIPLLPINFLRGIDPNKHILVPG. Residues 173 to 189 traverse the membrane as a helical segment; the sequence is VSLGIWLMALTKTIDTV. The Cytoplasmic segment spans residues 190 to 225; it reads EFIVKQLVFQPVVSKQVKEKTKEKVVELKTTEAELD.

The protein belongs to the WRB/GET1 family. Component of the Golgi to ER traffic (GET) complex, which is composed of GET1, GET2 and GET3. Within the complex, GET1 and GET2 form a heterotetramer which is stabilized by phosphatidylinositol binding and which binds to the GET3 homodimer.

The protein resides in the endoplasmic reticulum membrane. It localises to the golgi apparatus membrane. In terms of biological role, required for the post-translational delivery of tail-anchored (TA) proteins to the endoplasmic reticulum. Together with GET2, acts as a membrane receptor for soluble GET3, which recognizes and selectively binds the transmembrane domain of TA proteins in the cytosol. The GET complex cooperates with the HDEL receptor ERD2 to mediate the ATP-dependent retrieval of resident ER proteins that contain a C-terminal H-D-E-L retention signal from the Golgi to the ER. This is Golgi to ER traffic protein 1 from Vanderwaltozyma polyspora (strain ATCC 22028 / DSM 70294 / BCRC 21397 / CBS 2163 / NBRC 10782 / NRRL Y-8283 / UCD 57-17) (Kluyveromyces polysporus).